Reading from the N-terminus, the 138-residue chain is Large ribosomal subunit protein uL14 (138 aa).

Belongs to the universal ribosomal protein uL14 family. As to quaternary structure, part of the 50S ribosomal subunit. Forms a cluster with proteins L3 and L24e, part of which may contact the 16S rRNA in 2 intersubunit bridges.

Binds to 23S rRNA. Forms part of two intersubunit bridges in the 70S ribosome. The polypeptide is Large ribosomal subunit protein uL14 (Sulfurisphaera tokodaii (strain DSM 16993 / JCM 10545 / NBRC 100140 / 7) (Sulfolobus tokodaii)).